Consider the following 568-residue polypeptide: Putative DEAD-box RNA helicase HEL64 (568 aa).

The disordered stretch occupies residues 1–34 (MEETYSPFTGRQGQYNQGYNGGGRRDSRGGMGER). Positions 23-34 (GRRDSRGGMGER) are enriched in basic and acidic residues. The Q motif signature appears at 102 to 130 (FDHLCGIVPPYLLKKLTAQNFTAPTPVQA). The Helicase ATP-binding domain occupies 133–307 (WPVLLSGRDL…AEFQKQWIRI (175 aa)). Residue 146–153 (AKTGSGKT) participates in ATP binding. Positions 255 to 258 (DEAD) match the DEAD box motif. The region spanning 335–483 (ELRKLMQEHR…EIPDWMIEWN (149 aa)) is the Helicase C-terminal domain.

The protein belongs to the DEAD box helicase family. DDX5/DBP2 subfamily.

It localises to the nucleus. It carries out the reaction ATP + H2O = ADP + phosphate + H(+). This Trypanosoma brucei brucei protein is Putative DEAD-box RNA helicase HEL64 (HEL64).